The sequence spans 256 residues: Thiazole synthase (256 aa).

The active-site Schiff-base intermediate with DXP is lysine 96. 1-deoxy-D-xylulose 5-phosphate contacts are provided by residues glycine 157, 183 to 184 (AG), and 205 to 206 (NT).

The protein belongs to the ThiG family. In terms of assembly, homotetramer. Forms heterodimers with either ThiH or ThiS.

Its subcellular location is the cytoplasm. It carries out the reaction [ThiS sulfur-carrier protein]-C-terminal-Gly-aminoethanethioate + 2-iminoacetate + 1-deoxy-D-xylulose 5-phosphate = [ThiS sulfur-carrier protein]-C-terminal Gly-Gly + 2-[(2R,5Z)-2-carboxy-4-methylthiazol-5(2H)-ylidene]ethyl phosphate + 2 H2O + H(+). Its pathway is cofactor biosynthesis; thiamine diphosphate biosynthesis. Its function is as follows. Catalyzes the rearrangement of 1-deoxy-D-xylulose 5-phosphate (DXP) to produce the thiazole phosphate moiety of thiamine. Sulfur is provided by the thiocarboxylate moiety of the carrier protein ThiS. In vitro, sulfur can be provided by H(2)S. The polypeptide is Thiazole synthase (Bacillus cereus (strain 03BB102)).